The sequence spans 793 residues: MLISGSSAALCALALPFAAAKSLWSDSPGNYSSFITTAFPLGNGRLGAMPIGSYDKEIVNLNVDSLWRGGPFESPTYSGGNPNVSKAGALPGIREWIFQNGTGNVSALLGEYPYYGSYQVLANLTIDMGELSDIDGYRRNLDLDSAVYSDHFSTGETYIEREAFCSYPDNVCVYRLSSNSSLPEITFGLENQLTSPAPNVSCHGNSISLYGQTYPVIGMIYNARVTVVVPGSSNTTDLCSSSTVKVPEGEKEVFLVFAADTNYEASNGNSKASFSFKGENPYMKVLQTATNAAKKSYSALKSSHVKDYQGVFNKFTLTLPDPNGSADRPTTELLSSYSQPGDPYVENLLFDYGRYLFISSSRPGSLPPNLQGLWTESYSPAWSGDYHANINLQMNHWAVDQTGLGELTEPLWTYMAETWMPRGAETAELLYGTSEGWVTHDEMNTFGHTAMKDVAQWADYPATNAWMSHHVWDHFDYSQDSAWYRETGYPILKGAAQFWLSQLVKDEYFKDGTLVVNPCNSPEHGPTLTPQTFGCTHYQQLIWELFDHVLQGWTASGDDDTSFKNAITSKFSTLDPGIHIGSWGQIQEWKLDIDVKNDTHRHLSNLYGWYPGYIISSVHGSNKTITDAVETTLYSRGTGVEDSNTGWAKVWRSACWALLNVTDEAYSELSLAIQDNFAENGFDMYSGSPPFQIDANFGLVGAMVQMLIRDSDRSSADASAGKTQDVLLGPAIPAAWGGGSVGGLRLRGGGVVSFSWNDSGVVDSCKADLSARGSDVSQVKFYVAGGRAIDCSS.

An N-terminal signal peptide occupies residues 1–20 (MLISGSSAALCALALPFAAA). 13 N-linked (GlcNAc...) asparagine glycosylation sites follow: Asn30, Asn83, Asn100, Asn104, Asn123, Asn179, Asn199, Asn234, Asn323, Asn597, Asn622, Asn660, and Asn757.

This sequence belongs to the glycosyl hydrolase 95 family.

It localises to the secreted. The catalysed reaction is an alpha-L-fucoside + H2O = L-fucose + an alcohol. Its function is as follows. Alpha-fucosidase involved in degradation of fucosylated xyloglucans. Hydrolyzes alpha-1,2-linked fucose. This chain is Probable alpha-fucosidase A (afcA), found in Aspergillus niger (strain ATCC MYA-4892 / CBS 513.88 / FGSC A1513).